The sequence spans 522 residues: MANQLRERHQGLKKKYRELIDGDPSLPPEKRNQVNLAQLLRDSREHNKQLSEELKELKQRLAEVHGDNKLLRMTIAKQRLGDEEVGTRHFPAHEREDLVQQLERAREQTEALEQSLKAATDELQDVRAERNVYQEKAHRLNLEINHILGSHENRILDIDALCMENRYLHERLMQLQEEVSLLKSNVMKYKSALESKKNCKVYGKSNSSALTGVLSAKQVQELLLSEENGCSLPVTSQSISDLKSLATALLETIHEKNMVIRHQRQTNKILGNRVAELERKLKTLEVSGLWSLPGITYNVSLGLGRRKAVIVLSDSQHVQSTTEQSVHLTPEAMVADEEIVTGEEVTEDTGLSADFSQDECQAGAVELNQNSDYFTHTYSVSATPQVSTPAENIQPVESMQSKTLALCDSERSACTAERSEQHDEDLQSGGHQSMSTEASLKALEEQAVENDNFSGDCESQGALEDSQPVTSETSGSFDCISGSESCTAEQQTERSIEEETEHASLNTSPPEQTSPHQECPSS.

Coiled-coil stretches lie at residues 1–196 and 260–287; these read MANQ…LESK and IRHQRQTNKILGNRVAELERKLKTLEVS. Residues 413–522 are disordered; the sequence is ACTAERSEQH…TSPHQECPSS (110 aa). 3 stretches are compositionally biased toward polar residues: residues 429-438, 467-490, and 503-522; these read GGHQSMSTEA, QPVTSETSGSFDCISGSESCTAEQ, and ASLNTSPPEQTSPHQECPSS.

This sequence belongs to the CCDC149 family.

This chain is Coiled-coil domain-containing protein 149-B (ccdc149b), found in Danio rerio (Zebrafish).